A 283-amino-acid chain; its full sequence is Putative S-adenosyl-L-methionine-dependent methyltransferase SAV_474/SAV474 (283 aa).

S-adenosyl-L-methionine contacts are provided by residues aspartate 121 and 150–151 (DL). The disordered stretch occupies residues 258-283 (AAYGRPISTPPQREERPGGLISAVRR).

Belongs to the UPF0677 family.

Its function is as follows. Exhibits S-adenosyl-L-methionine-dependent methyltransferase activity. The polypeptide is Putative S-adenosyl-L-methionine-dependent methyltransferase SAV_474/SAV474 (Streptomyces avermitilis (strain ATCC 31267 / DSM 46492 / JCM 5070 / NBRC 14893 / NCIMB 12804 / NRRL 8165 / MA-4680)).